A 180-amino-acid chain; its full sequence is Oligoribonuclease (180 aa).

Residues Leu7 to Leu170 form the Exonuclease domain. The active site involves Tyr128.

It belongs to the oligoribonuclease family.

The protein localises to the cytoplasm. 3'-to-5' exoribonuclease specific for small oligoribonucleotides. This is Oligoribonuclease from Pseudomonas paraeruginosa (strain DSM 24068 / PA7) (Pseudomonas aeruginosa (strain PA7)).